The primary structure comprises 417 residues: D-amino acid dehydrogenase (417 aa).

Position 3-17 (3-17 (AVVLGSGVVGLMSAW)) interacts with FAD.

Belongs to the DadA oxidoreductase family. FAD serves as cofactor.

It carries out the reaction a D-alpha-amino acid + A + H2O = a 2-oxocarboxylate + AH2 + NH4(+). Functionally, oxidative deamination of D-amino acids. This is D-amino acid dehydrogenase from Vibrio vulnificus (strain CMCP6).